The chain runs to 87 residues: Small ribosomal subunit protein uS17 (87 aa).

It belongs to the universal ribosomal protein uS17 family. As to quaternary structure, part of the 30S ribosomal subunit.

In terms of biological role, one of the primary rRNA binding proteins, it binds specifically to the 5'-end of 16S ribosomal RNA. The protein is Small ribosomal subunit protein uS17 of Geobacillus sp. (strain WCH70).